The following is a 49-amino-acid chain: Large ribosomal subunit protein bL36 (49 aa).

This sequence belongs to the bacterial ribosomal protein bL36 family.

The sequence is that of Large ribosomal subunit protein bL36 from Pseudomonas fluorescens (strain ATCC BAA-477 / NRRL B-23932 / Pf-5).